The chain runs to 355 residues: Proto-oncogene Wnt-3 (355 aa).

A signal peptide spans 1–21 (MEPHLLGLLLGLLLSGTRVLA). 11 disulfide bridges follow: Cys-80–Cys-91, Cys-131–Cys-139, Cys-141–Cys-158, Cys-206–Cys-220, Cys-208–Cys-215, Cys-284–Cys-315, Cys-300–Cys-310, Cys-314–Cys-354, Cys-330–Cys-345, Cys-332–Cys-342, and Cys-337–Cys-338. Residue Asn-90 is glycosylated (N-linked (GlcNAc...) asparagine). Ser-212 is lipidated: O-palmitoleoyl serine; by PORCN. N-linked (GlcNAc...) asparagine glycosylation is present at Asn-301.

Belongs to the Wnt family. In terms of assembly, forms a soluble 1:1 complex with AFM; this prevents oligomerization and is required for prolonged biological activity. The complex with AFM may represent the physiological form in body fluids. Interacts with PORCN. Interacts with WLS. In terms of processing, palmitoleoylation is required for efficient binding to frizzled receptors. Depalmitoleoylation leads to Wnt signaling pathway inhibition. As to expression, detected at low levels in adult brain. Dorsal portion of the neural tube, dorsal ectoderm, the branchial arches, and the limb buds.

Its subcellular location is the secreted. The protein resides in the extracellular space. It is found in the extracellular matrix. Functionally, ligand for members of the frizzled family of seven transmembrane receptors. Functions in the canonical Wnt signaling pathway that results in activation of transcription factors of the TCF/LEF family. Required for normal gastrulation, formation of the primitive streak, and for the formation of the mesoderm during early embryogenesis. Required for normal formation of the apical ectodermal ridge and for normal embryonic limb development. This is Proto-oncogene Wnt-3 (Wnt3) from Mus musculus (Mouse).